The chain runs to 474 residues: Chromosomal replication initiator protein DnaA (474 aa).

Residues 1 to 90 (MSSSLWLQCL…RQVVVPSSQI (90 aa)) form a domain I, interacts with DnaA modulators region. A domain II region spans residues 91–137 (IAPAAPAVTLAPRPLPATRILQDDAPSRSWEPAPSPVQPESKSGYRS). The tract at residues 112-137 (QDDAPSRSWEPAPSPVQPESKSGYRS) is disordered. Polar residues predominate over residues 128 to 137 (QPESKSGYRS). The interval 138–354 (NVNPKHNFNN…GALNRVIANA (217 aa)) is domain III, AAA+ region. 4 residues coordinate ATP: glycine 182, glycine 184, lysine 185, and threonine 186. The tract at residues 355-474 (NFTGRAITID…YSNLIRTLST (120 aa)) is domain IV, binds dsDNA.

This sequence belongs to the DnaA family. Oligomerizes as a right-handed, spiral filament on DNA at oriC.

The protein localises to the cytoplasm. Plays an essential role in the initiation and regulation of chromosomal replication. ATP-DnaA binds to the origin of replication (oriC) to initiate formation of the DNA replication initiation complex once per cell cycle. Binds the DnaA box (a 9 base pair repeat at the origin) and separates the double-stranded (ds)DNA. Forms a right-handed helical filament on oriC DNA; dsDNA binds to the exterior of the filament while single-stranded (ss)DNA is stabiized in the filament's interior. The ATP-DnaA-oriC complex binds and stabilizes one strand of the AT-rich DNA unwinding element (DUE), permitting loading of DNA polymerase. After initiation quickly degrades to an ADP-DnaA complex that is not apt for DNA replication. Binds acidic phospholipids. This is Chromosomal replication initiator protein DnaA from Photobacterium profundum (strain SS9).